Reading from the N-terminus, the 25-residue chain is Caerin-1.2 (25 aa).

A Leucine amide modification is found at Leu25.

Expressed by the skin parotoid and/or rostral glands.

The protein localises to the secreted. Antibacterial peptide, that adopts an alpha helical conformation which can disrupt bacterial membranes. Each caerin displays a different antimicrobial specificity. This Ranoidea caerulea (Green tree frog) protein is Caerin-1.2.